The primary structure comprises 270 residues: MGFWCRMLENQEQEEVITVRVQDPRVQNEGSWNSYVDYKIFLHTNSKAFTAKTSCVRRRYREFVWLRKQLQRNAGLVPVPELPGKSTFFGSSDEFIEKRRQGLQHFLEKVLQSVVLLSDSQLHLFLQSQLSVPEIEACVQGRSPVSVSDAILRYAMSNCGWAQEERRGSSHLAEGDQPKSCCFLPRPGRRSSPSPPPGEEKDPFEVWAPVVDSEAPPLESPTLPPTSSPSCCGFARPDEGLSASQPVRRVLGGGHAVPLDPGQLETVLEK.

A PX domain is found at 16-132 (VITVRVQDPR…HLFLQSQLSV (117 aa)). Residues arginine 59, lysine 85, and arginine 99 each contribute to the a 1,2-diacyl-sn-glycero-3-phospho-(1D-myo-inositol-3-phosphate) site. Positions 135–139 (IEACV) are important for membrane trafficking. Residues 168–177 (GSSHLAEGDQ) show a composition bias toward basic and acidic residues. Disordered regions lie at residues 168-244 (GSSH…LSAS) and 251-270 (LGGGHAVPLDPGQLETVLEK). The span at 218–227 (LESPTLPPTS) shows a compositional bias: pro residues.

This sequence belongs to the sorting nexin family. Monomer. Interacts with TRPV3; this interaction promotes TRPV3 trafficking from the cell membrane to lysosome for degradation.

Its subcellular location is the cell membrane. The protein resides in the endosome. It localises to the cytoplasm. Its function is as follows. Phosphoinositide-binding protein involved in protein sorting and membrane trafficking in endosomes. Regulates the levels of TRPV3 by promoting its trafficking from the cell membrane to lysosome for degradation. The protein is Sorting nexin-11 (SNX11) of Bos taurus (Bovine).